The following is a 434-amino-acid chain: Glutamate-1-semialdehyde 2,1-aminomutase (434 aa).

At Lys265 the chain carries N6-(pyridoxal phosphate)lysine.

Belongs to the class-III pyridoxal-phosphate-dependent aminotransferase family. HemL subfamily. In terms of assembly, homodimer. Pyridoxal 5'-phosphate serves as cofactor.

The protein resides in the cytoplasm. It carries out the reaction (S)-4-amino-5-oxopentanoate = 5-aminolevulinate. It functions in the pathway porphyrin-containing compound metabolism; protoporphyrin-IX biosynthesis; 5-aminolevulinate from L-glutamyl-tRNA(Glu): step 2/2. This is Glutamate-1-semialdehyde 2,1-aminomutase from Ruminiclostridium cellulolyticum (strain ATCC 35319 / DSM 5812 / JCM 6584 / H10) (Clostridium cellulolyticum).